The primary structure comprises 150 residues: MGMIHIENRQKNQKIAVETLEKVAQRILNDSECPDAELSLLIVDDIEIQQINRDYLQRDKPTNVISFAMQEGEDVGLHPGLLGDVIISADTAARDAREADLPFESELYFLLLHGVLHLLGYDHERGTEEDARRMEAREAELFARIREEFL.

Residues histidine 113, histidine 117, and histidine 123 each contribute to the Zn(2+) site.

Belongs to the endoribonuclease YbeY family. Zn(2+) serves as cofactor.

It is found in the cytoplasm. In terms of biological role, single strand-specific metallo-endoribonuclease involved in late-stage 70S ribosome quality control and in maturation of the 3' terminus of the 16S rRNA. This is Endoribonuclease YbeY from Syntrophotalea carbinolica (strain DSM 2380 / NBRC 103641 / GraBd1) (Pelobacter carbinolicus).